The sequence spans 1020 residues: Protein CLASP-2 (1020 aa).

The span at 259-271 shows a compositional bias: low complexity; sequence ASDAASSSTSINS. Disordered regions lie at residues 259 to 280, 329 to 387, and 419 to 461; these read ASDAASSSTSINSERGTAPFRS, PMTT…RPSA, and LQKA…ALDT. Residues 329–343 are compositionally biased toward polar residues; the sequence is PMTTRTLSKIDTSPG. The span at 372–381 shows a compositional bias: low complexity; it reads SQPGSRNGSP. The segment covering 450–460 has biased composition (polar residues); it reads QKATPQKSALD. The HEAT repeat unit spans residues 954–992; that stretch reads LAPCVIKSYDSPSSAVRKTAVYCLVAMVNKLGMKTMEPH.

This sequence belongs to the CLASP family. Interacts with hcp-1 and hcp-2.

The protein resides in the cytoplasm. It is found in the cytoskeleton. Its subcellular location is the microtubule organizing center. The protein localises to the centrosome. It localises to the chromosome. The protein resides in the centromere. It is found in the kinetochore. Its subcellular location is the spindle. Functionally, probable microtubule plus-end tracking protein that promotes the stabilization of dynamic microtubules. Required for the formation of mitotic and meiotic spindles. Specifically promotes the polymerization of kinetochore-bound microtubules. Also required for cytoplasmic streaming. Essential for embryonic development. The polypeptide is Protein CLASP-2 (cls-2) (Caenorhabditis elegans).